The primary structure comprises 142 residues: Galactose-binding lectin (142 aa).

In terms of domain architecture, Galectin spans 1-141 (TYAEVESFGV…GTDIWDLLLL (141 aa)).

In terms of assembly, homotetramer.

Cytotoxic activity against L.infantum promastigotes is completely inhibited by D-galactose. Inhibition activity against biofilm formation by S.aureus and S.epidermidis is inhibited by alpha-lactose. Hemagglutination activity is inhibited by alpha-lactose (MIC=100 mM), beta-lactose (MIC=100 mM), lactulose (MIC=100 mM), bovine submaxillary mucin (BSM) (MIC=32 ug/ml), fetuin (MIC=16 ug/ml), porcine stomach mucin (PSM) type 2 (MIC=8 ug/ml) and PSM type 3 (MIC=8 ug/ml). Its function is as follows. Galactose-binding lectin. Displays antibacterial and hemagglutinin activity. Inhibits the growth of L.infantum promastigotes by damaging their membrane integrity and inducing cell apoptosis via the production of reactive oxygen species (ROS). Inhibition of L.infantum promastigotes appears to increase with time (MIC=1.2 uM/ml after 24 hours, MIC=0.9 uM/ml after 48 hours and MIC=0.6 uM/ml after 72 hours). Agglutinates Gram-negative and Gram-positive bacteria including E.coli, S.aureus and S.epidermidis, and inhibits biofilm formation by S.aureus and S.epidermidis. Displays hemagglutination activity towards all types of human erythrocytes (O, A and B) and rabbit erythrocytes. This is Galactose-binding lectin from Chondrilla caribensis (Chicken liver sponge).